Consider the following 289-residue polypeptide: MLYFLPTPIGNLADITLRTLEVLERCEVFLCEDTRVSKRLLHLLAKNPIISHSFPNIAAKKREFIAFHSHNDQEFLNQIEPSFFDKEIAVMSDAGMPSLSDPGMSLVAYALKHNLQYDVLPGANALTTAFCASGFLEGRFFYAGFLPHKSKERRLRIIKILNALAYLEEKTPVVFYESPHRLLETLRDLNDLAQGMHLFAAKELTKLHQQYYLGEISQIMTQLQKSNIQGEWVLVLLNEKKIEPSMGLSALLELDLPPKIKAKMEAAMTQKNAKELYFQRLLEEKKQCD.

The protein belongs to the methyltransferase superfamily. RsmI family.

The protein localises to the cytoplasm. It carries out the reaction cytidine(1402) in 16S rRNA + S-adenosyl-L-methionine = 2'-O-methylcytidine(1402) in 16S rRNA + S-adenosyl-L-homocysteine + H(+). In terms of biological role, catalyzes the 2'-O-methylation of the ribose of cytidine 1402 (C1402) in 16S rRNA. The sequence is that of Ribosomal RNA small subunit methyltransferase I from Helicobacter pylori (strain J99 / ATCC 700824) (Campylobacter pylori J99).